A 245-amino-acid chain; its full sequence is Probable transcriptional regulatory protein BF2589 (245 aa).

Residues 225-245 (EDEDVQNVYTNMKPADNEGEE) are disordered.

The protein belongs to the TACO1 family.

Its subcellular location is the cytoplasm. This Bacteroides fragilis (strain ATCC 25285 / DSM 2151 / CCUG 4856 / JCM 11019 / LMG 10263 / NCTC 9343 / Onslow / VPI 2553 / EN-2) protein is Probable transcriptional regulatory protein BF2589.